Here is a 440-residue protein sequence, read N- to C-terminus: Probable exopolygalacturonase C (440 aa).

The first 21 residues, 1-21 (MLITNPALLGILASLVPLALG), serve as a signal peptide directing secretion. N-linked (GlcNAc...) asparagine glycans are attached at residues N84 and N151. PbH1 repeat units follow at residues 188 to 210 (GDDI…PFNT), 217 to 238 (GTNI…AVNT), and 240 to 261 (SHNI…SIGS). N-linked (GlcNAc...) asparagine glycosylation occurs at N219. D231 serves as the catalytic Proton donor. The active site involves H255. Residue N271 is glycosylated (N-linked (GlcNAc...) asparagine). The stretch at 272–293 (ITNLRFEDVTVIDALYAARFKS) is one PbH1 4 repeat. N-linked (GlcNAc...) asparagine glycosylation occurs at N313. C389 and C395 are joined by a disulfide. An N-linked (GlcNAc...) asparagine glycan is attached at N434.

It belongs to the glycosyl hydrolase 28 family.

It is found in the secreted. It catalyses the reaction [(1-&gt;4)-alpha-D-galacturonosyl](n) + H2O = alpha-D-galacturonate + [(1-&gt;4)-alpha-D-galacturonosyl](n-1). Its function is as follows. Specific in hydrolyzing the terminal glycosidic bond of polygalacturonic acid and oligogalacturonates. The chain is Probable exopolygalacturonase C (pgxC) from Aspergillus fumigatus (strain ATCC MYA-4609 / CBS 101355 / FGSC A1100 / Af293) (Neosartorya fumigata).